We begin with the raw amino-acid sequence, 519 residues long: Ribonuclease Y (519 aa).

The helical transmembrane segment at Pro-3 to Val-23 threads the bilayer. In terms of domain architecture, KH spans Thr-209–Leu-272. An HD domain is found at Val-335–Ala-428.

This sequence belongs to the RNase Y family.

It is found in the cell membrane. Endoribonuclease that initiates mRNA decay. The protein is Ribonuclease Y of Bacillus velezensis (strain DSM 23117 / BGSC 10A6 / LMG 26770 / FZB42) (Bacillus amyloliquefaciens subsp. plantarum).